We begin with the raw amino-acid sequence, 322 residues long: Tropinone reductase homolog At2g29260, chloroplastic (322 aa).

A chloroplast-targeting transit peptide spans 1–61; the sequence is MVLDMASHLY…YASQSSIAIT (61 aa). NADP(+) is bound at residue 74–98; it reads LVTGGTRGIGRAIVEELAGLGAEVH. Residue Ser207 coordinates substrate.

The protein belongs to the short-chain dehydrogenases/reductases (SDR) family. SDR65C subfamily.

The protein localises to the plastid. It is found in the chloroplast. This chain is Tropinone reductase homolog At2g29260, chloroplastic, found in Arabidopsis thaliana (Mouse-ear cress).